The chain runs to 326 residues: MKLYPWLIKPYNNIVQQYQKKKAHHAILIKTPRGIGVSLLIWFISKWLLCLKPIGLNSCDKCHGCKLMSANNHPDWHNFTPEKNNLFSIESVRIINEKIFTCSRQGGSKIIFLSDTGKLTESAINAFLKTLEEPPRKTWFFLVNYKNLNSHSTLNSRCLIYKLFIPEEKKSLYWLKKETVKKNRSCLTALRINQGSPLYAKKFINSNLWIDRINFYECLHDSFKKNNLLKILPLITEKDSQVKIDWICFLLFDSIKFYFNENDNLTNSDQIELIQFFSYNYKNTILDTSIRTWLHCKYRLSNISGINCELLLSEQLLIWEKILNFS.

As to quaternary structure, DNA polymerase III contains a core (composed of alpha, epsilon and theta chains) that associates with a tau subunit. This core dimerizes to form the POLIII' complex. PolIII' associates with the gamma complex (composed of gamma, delta, delta', psi and chi chains) and with the beta chain to form the complete DNA polymerase III complex.

It catalyses the reaction DNA(n) + a 2'-deoxyribonucleoside 5'-triphosphate = DNA(n+1) + diphosphate. Its function is as follows. DNA polymerase III is a complex, multichain enzyme responsible for most of the replicative synthesis in bacteria. This DNA polymerase also exhibits 3' to 5' exonuclease activity. The chain is DNA polymerase III subunit delta' (holB) from Buchnera aphidicola subsp. Acyrthosiphon pisum (strain APS) (Acyrthosiphon pisum symbiotic bacterium).